Consider the following 557-residue polypeptide: Phosphoribosylaminoimidazole carboxylase, chloroplastic (557 aa).

Positions 108–293 (KVALLPAWIP…QFEQHLPAVV (186 aa)) constitute an ATP-grasp domain. 132-189 (WDSLDIHFMIKSRRLAYDGRGNFVAKSEEELSSAVDALGGFDRGLYAEKWAPFVKELA) lines the ATP pocket. Residues 387-557 (CSTLLGFIMG…HGWESYLKNS (171 aa)) form an AIR carboxylase catalytic subunit region.

The protein in the C-terminal section; belongs to the AIR carboxylase family. Class I subfamily.

It is found in the plastid. The protein localises to the chloroplast. It carries out the reaction 5-amino-1-(5-phospho-D-ribosyl)imidazole-4-carboxylate + H(+) = 5-amino-1-(5-phospho-beta-D-ribosyl)imidazole + CO2. Its pathway is purine metabolism; IMP biosynthesis via de novo pathway; 5-amino-1-(5-phospho-D-ribosyl)imidazole-4-carboxylate from 5-amino-1-(5-phospho-D-ribosyl)imidazole (carboxylase route): step 1/1. The chain is Phosphoribosylaminoimidazole carboxylase, chloroplastic (PURKE) from Vigna aconitifolia (Moth bean).